Consider the following 202-residue polypeptide: Large ribosomal subunit protein bL9 (202 aa).

The segment at 176 to 202 (AAGEFFDPDAQHDDEPAAEDDQNAEEK) is disordered. The segment covering 191–202 (PAAEDDQNAEEK) has biased composition (acidic residues).

The protein belongs to the bacterial ribosomal protein bL9 family.

Functionally, binds to the 23S rRNA. The protein is Large ribosomal subunit protein bL9 of Nitrobacter winogradskyi (strain ATCC 25391 / DSM 10237 / CIP 104748 / NCIMB 11846 / Nb-255).